Reading from the N-terminus, the 130-residue chain is Small ribosomal subunit protein uS8A (130 aa).

This sequence belongs to the universal ribosomal protein uS8 family. In terms of assembly, component of the small ribosomal subunit (SSU). Mature ribosomes consist of a small (40S) and a large (60S) subunit. The 40S subunit contains about 32 different proteins and 1 molecule of RNA (18S). The 60S subunit contains 45 different proteins and 3 molecules of RNA (25S, 5.8S and 5S).

The protein resides in the cytoplasm. Functionally, component of the ribosome, a large ribonucleoprotein complex responsible for the synthesis of proteins in the cell. The small ribosomal subunit (SSU) binds messenger RNAs (mRNAs) and translates the encoded message by selecting cognate aminoacyl-transfer RNA (tRNA) molecules. The large subunit (LSU) contains the ribosomal catalytic site termed the peptidyl transferase center (PTC), which catalyzes the formation of peptide bonds, thereby polymerizing the amino acids delivered by tRNAs into a polypeptide chain. The nascent polypeptides leave the ribosome through a tunnel in the LSU and interact with protein factors that function in enzymatic processing, targeting, and the membrane insertion of nascent chains at the exit of the ribosomal tunnel. The sequence is that of Small ribosomal subunit protein uS8A (RPS22A) from Candida albicans (strain SC5314 / ATCC MYA-2876) (Yeast).